Consider the following 283-residue polypeptide: Pantothenate synthetase (283 aa).

An ATP-binding site is contributed by 30–37 (MGYLHEGH). The Proton donor role is filled by His-37. Gln-61 contacts (R)-pantoate. Position 61 (Gln-61) interacts with beta-alanine. 147-150 (GQKD) lines the ATP pocket. Gln-153 is a (R)-pantoate binding site. ATP-binding positions include Val-176 and 184–187 (LSSR).

Belongs to the pantothenate synthetase family. As to quaternary structure, homodimer.

It localises to the cytoplasm. The enzyme catalyses (R)-pantoate + beta-alanine + ATP = (R)-pantothenate + AMP + diphosphate + H(+). It participates in cofactor biosynthesis; (R)-pantothenate biosynthesis; (R)-pantothenate from (R)-pantoate and beta-alanine: step 1/1. Functionally, catalyzes the condensation of pantoate with beta-alanine in an ATP-dependent reaction via a pantoyl-adenylate intermediate. The protein is Pantothenate synthetase of Moorella thermoacetica (strain ATCC 39073 / JCM 9320).